Here is a 268-residue protein sequence, read N- to C-terminus: uncharacterized protein (268 aa).

The next 3 helical transmembrane spans lie at 169–189 (AIIYVFMCLFFSLFWFYQGFA), 190–210 (GVKTSILTGTAEIGLAILWLL), and 225–245 (IFAGFACLGSEIFMWVLLSVF).

The protein localises to the cell membrane. This is an uncharacterized protein from Bacillus subtilis (strain 168).